Reading from the N-terminus, the 303-residue chain is Glycosyltransferase AglJ (303 aa).

A run of 2 helical transmembrane segments spans residues 230–250 (FYFG…ALYV) and 263–283 (VIAV…MFGV).

This sequence belongs to the glycosyltransferase 2 family.

Its subcellular location is the cell membrane. It participates in cell surface structure biogenesis; S-layer biogenesis. Functionally, involved in the assembly of a N-linked pentasaccharide that decorates the S-layer glycoprotein and flagellins. Adds the first hexose subunit of the pentasaccharide to the dolichol phosphate carrier. This is Glycosyltransferase AglJ (aglJ) from Haloferax volcanii (strain ATCC 29605 / DSM 3757 / JCM 8879 / NBRC 14742 / NCIMB 2012 / VKM B-1768 / DS2) (Halobacterium volcanii).